Reading from the N-terminus, the 249-residue chain is 1-(5-phosphoribosyl)-5-[(5-phosphoribosylamino)methylideneamino] imidazole-4-carboxamide isomerase (249 aa).

Asp11 (proton acceptor) is an active-site residue. Residue Asp132 is the Proton donor of the active site.

The protein belongs to the HisA/HisF family.

It localises to the cytoplasm. The catalysed reaction is 1-(5-phospho-beta-D-ribosyl)-5-[(5-phospho-beta-D-ribosylamino)methylideneamino]imidazole-4-carboxamide = 5-[(5-phospho-1-deoxy-D-ribulos-1-ylimino)methylamino]-1-(5-phospho-beta-D-ribosyl)imidazole-4-carboxamide. It functions in the pathway amino-acid biosynthesis; L-histidine biosynthesis; L-histidine from 5-phospho-alpha-D-ribose 1-diphosphate: step 4/9. This chain is 1-(5-phosphoribosyl)-5-[(5-phosphoribosylamino)methylideneamino] imidazole-4-carboxamide isomerase, found in Nitrobacter winogradskyi (strain ATCC 25391 / DSM 10237 / CIP 104748 / NCIMB 11846 / Nb-255).